A 773-amino-acid chain; its full sequence is Transducin-like enhancer protein 4 (773 aa).

Disordered regions lie at residues M1–Q22, H140–P162, and L182–L360. Residues M1 to Q136 form a q domain region. The GP domain stretch occupies residues H137 to S204. The span at P183 to I202 shows a compositional bias: basic and acidic residues. Residues K203–S212 show a composition bias toward low complexity. A ccN domain region spans residues S205 to P274. A phosphoserine mark is found at S208, S212, and S222. Over residues G215–D252 the composition is skewed to basic and acidic residues. N6-acetyllysine is present on K237. Phosphoserine occurs at positions 245, 250, 269, and 273. A compositionally biased stretch (basic and acidic residues) spans S273–A289. The SP domain stretch occupies residues R275–H452. K281 is modified (N6-acetyllysine). The span at P290–S305 shows a compositional bias: low complexity. A Phosphoserine modification is found at S292. A compositionally biased stretch (polar residues) spans T317–P328. T318 carries the phosphothreonine modification. S321 and S323 each carry phosphoserine. Phosphothreonine occurs at positions 325, 327, 334, and 340. Residue S419 is modified to Phosphoserine. WD repeat units lie at residues N485–P523, N531–K570, S575–Q614, G617–Q656, D658–L697, L699–Q738, and K740–Y773.

This sequence belongs to the WD repeat Groucho/TLE family. As to quaternary structure, homooligomer and heterooligomer with other family members. Interacts with PAX5. Interacts with LEF1, TCF7, TCF7L1 and TCF7L2. Interacts with ZNF703; TLE4 may mediate ZNF703 transcriptional repression. Interacts with SIX3 and SIX6. Interacts with PAX2. Interacts with TLE1. Post-translationally, phosphorylated. PAX5 binding increases phosphorylation. In terms of processing, ubiquitinated by XIAP/BIRC4. In terms of tissue distribution, in all tissues examined, mostly in brain, and muscle.

It localises to the nucleus. Its function is as follows. Transcriptional corepressor that binds to a number of transcription factors. Inhibits the transcriptional activation mediated by PAX5, and by CTNNB1 and TCF family members in Wnt signaling. The effects of full-length TLE family members may be modulated by association with dominant-negative AES. Essential for the transcriptional repressor activity of SIX3 during retina and lens development and for SIX3 transcriptional auto-repression. Involved in transcriptional repression of GNRHR and enhances MSX1-mediated transcriptional repression of CGA/alpha-GSU. The sequence is that of Transducin-like enhancer protein 4 (TLE4) from Homo sapiens (Human).